A 227-amino-acid polypeptide reads, in one-letter code: MKLAGIDEAGRGPVLGPMVIAAVVVDEGNVPKLEELGVKDSKKLTPKRRERLFDEIVQLLDDYVILELWPEEIDSREGTLNEFEVENFVKALNSLKVKPDVVYIDAADVKEARFGEEIKAKLDFEADIIAEHKADDKFVPVSAASILAKVARDRAIEKLKDQYGEIGSGYPSDPRTRTFLEEYYRKHGEFPPIVRRTWKTLKKIEEKLAKEMKKRRGQTSLEEFFGK.

The RNase H type-2 domain maps to 1–210 (MKLAGIDEAG…LKKIEEKLAK (210 aa)). The a divalent metal cation site is built by Asp7, Glu8, and Asp105.

This sequence belongs to the RNase HII family. Mn(2+) is required as a cofactor. The cofactor is Mg(2+).

It is found in the cytoplasm. The catalysed reaction is Endonucleolytic cleavage to 5'-phosphomonoester.. In terms of biological role, endonuclease that specifically degrades the RNA of RNA-DNA hybrids. The polypeptide is Ribonuclease HII (Thermococcus onnurineus (strain NA1)).